Consider the following 141-residue polypeptide: Ribosome-binding factor A (141 aa).

It belongs to the RbfA family. In terms of assembly, monomer. Binds 30S ribosomal subunits, but not 50S ribosomal subunits or 70S ribosomes.

It is found in the cytoplasm. One of several proteins that assist in the late maturation steps of the functional core of the 30S ribosomal subunit. Associates with free 30S ribosomal subunits (but not with 30S subunits that are part of 70S ribosomes or polysomes). Required for efficient processing of 16S rRNA. May interact with the 5'-terminal helix region of 16S rRNA. The sequence is that of Ribosome-binding factor A from Afipia carboxidovorans (strain ATCC 49405 / DSM 1227 / KCTC 32145 / OM5) (Oligotropha carboxidovorans).